An 81-amino-acid chain; its full sequence is Sulfur carrier protein TusA (81 aa).

Cys-19 serves as the catalytic Cysteine persulfide intermediate.

The protein belongs to the sulfur carrier protein TusA family.

The protein resides in the cytoplasm. Functionally, sulfur carrier protein which probably makes part of a sulfur-relay system. This chain is Sulfur carrier protein TusA, found in Aeromonas salmonicida (strain A449).